Reading from the N-terminus, the 214-residue chain is Adenylate kinase (214 aa).

10–15 contributes to the ATP binding site; sequence GAGKGT. The NMP stretch occupies residues 30 to 59; that stretch reads STGDMLRAAVKAGTELGKQAKEIMDAGKLV. Residues Thr31, Arg36, 57 to 59, 85 to 88, and Gln92 each bind AMP; these read KLV and GFPR. An LID region spans residues 122-159; that stretch reads GRRVHAASGRVYHVKFNPPKVEGKDDVTGEDLTIRKDD. ATP is bound by residues Arg123 and 132–133; that span reads VY. AMP contacts are provided by Arg156 and Arg167. Position 200 (Arg200) interacts with ATP.

This sequence belongs to the adenylate kinase family. In terms of assembly, monomer.

It is found in the cytoplasm. The catalysed reaction is AMP + ATP = 2 ADP. The protein operates within purine metabolism; AMP biosynthesis via salvage pathway; AMP from ADP: step 1/1. In terms of biological role, catalyzes the reversible transfer of the terminal phosphate group between ATP and AMP. Plays an important role in cellular energy homeostasis and in adenine nucleotide metabolism. The protein is Adenylate kinase of Pectobacterium carotovorum subsp. carotovorum (strain PC1).